The chain runs to 244 residues: Type III pantothenate kinase (244 aa).

7–14 (DIGNTRLK) serves as a coordination point for ATP. Substrate is bound by residues Tyr95 and 102-105 (GIDR). Asp104 acts as the Proton acceptor in catalysis. Thr126 is an ATP binding site. Thr177 is a substrate binding site.

It belongs to the type III pantothenate kinase family. Homodimer. NH4(+) is required as a cofactor. It depends on K(+) as a cofactor.

It localises to the cytoplasm. The catalysed reaction is (R)-pantothenate + ATP = (R)-4'-phosphopantothenate + ADP + H(+). Its pathway is cofactor biosynthesis; coenzyme A biosynthesis; CoA from (R)-pantothenate: step 1/5. Catalyzes the phosphorylation of pantothenate (Pan), the first step in CoA biosynthesis. The sequence is that of Type III pantothenate kinase from Acinetobacter baumannii (strain AB307-0294).